The following is a 710-amino-acid chain: E3 ubiquitin-protein ligase TRIM9 (710 aa).

The segment at 10 to 50 (CPVCGSFYREPIILPCSHNLCQACARNILVQTPESESPQSR) adopts an RING-type zinc-finger fold. The residue at position 41 (Thr-41) is a Phosphothreonine. Phosphoserine occurs at positions 44, 46, 49, and 53. B box-type zinc fingers lie at residues 163–212 (AAAL…LVPP) and 224–266 (RKVS…VKAL). The Zn(2+) site is built by Cys-168, Cys-171, Cys-193, His-198, Cys-229, His-232, Cys-252, and His-258. Residues 273 to 340 (HKSQLSQALN…KAQLLARVNK (68 aa)) are a coiled coil. In terms of domain architecture, COS spans 374 to 432 (IKENDPSGFLQISDALIRRVHLTEDQWGKGTLTPRMTTDFDLSLDNSPLLQSIHQLDFV). In terms of domain architecture, Fibronectin type-III spans 440–535 (VPATPILQLE…KTLVLQTSEV (96 aa)). One can recognise a B30.2/SPRY domain in the interval 533 to 702 (SEVAWFAFDP…LHTGLPVPDF (170 aa)).

Interacts with SNAP25. Post-translationally, auto-ubiquitinated. As to expression, brain (at protein level). Expressed in fetal and adult brain.

It localises to the cytoplasmic vesicle. The protein localises to the secretory vesicle. It is found in the synaptic vesicle. The protein resides in the synapse. Its subcellular location is the cytoplasm. It localises to the cytoskeleton. The protein localises to the cell projection. It is found in the dendrite. It catalyses the reaction S-ubiquitinyl-[E2 ubiquitin-conjugating enzyme]-L-cysteine + [acceptor protein]-L-lysine = [E2 ubiquitin-conjugating enzyme]-L-cysteine + N(6)-ubiquitinyl-[acceptor protein]-L-lysine.. It functions in the pathway protein modification; protein ubiquitination. In terms of biological role, E3 ubiquitin-protein ligase which ubiquitinates itself in cooperation with an E2 enzyme UBE2D2/UBC4 and serves as a targeting signal for proteasomal degradation. May play a role in regulation of neuronal functions. May act as a regulator of synaptic vesicle exocytosis by controlling the availability of SNAP25 for the SNARE complex formation. The protein is E3 ubiquitin-protein ligase TRIM9 (Trim9) of Rattus norvegicus (Rat).